The chain runs to 708 residues: Elongation factor G (708 aa).

One can recognise a tr-type G domain in the interval 8-290; it reads KRYRNIGISA…AVIQYLPAPM (283 aa). GTP-binding positions include 17–24, 88–92, and 142–145; these read AHIDAGKT, DTPGH, and NKMD.

This sequence belongs to the TRAFAC class translation factor GTPase superfamily. Classic translation factor GTPase family. EF-G/EF-2 subfamily.

The protein resides in the cytoplasm. Catalyzes the GTP-dependent ribosomal translocation step during translation elongation. During this step, the ribosome changes from the pre-translocational (PRE) to the post-translocational (POST) state as the newly formed A-site-bound peptidyl-tRNA and P-site-bound deacylated tRNA move to the P and E sites, respectively. Catalyzes the coordinated movement of the two tRNA molecules, the mRNA and conformational changes in the ribosome. This is Elongation factor G from Psychrobacter cryohalolentis (strain ATCC BAA-1226 / DSM 17306 / VKM B-2378 / K5).